A 375-amino-acid chain; its full sequence is Phytanoyl-CoA hydroxylase-interacting protein-like (375 aa).

Ser-11, Ser-12, and Ser-15 each carry phosphoserine. Residue Asn-22 is glycosylated (N-linked (GlcNAc...) asparagine). Ser-24 carries the phosphoserine modification. Asn-36 carries N-linked (GlcNAc...) asparagine glycosylation. Residues 51–160 enclose the Fibronectin type-III domain; the sequence is VPHNIKINNI…EIIEFCTADY (110 aa).

The protein belongs to the PHYHIP family.

Functionally, may play a role in the development of the central system. The sequence is that of Phytanoyl-CoA hydroxylase-interacting protein-like (Phyhipl) from Mus musculus (Mouse).